We begin with the raw amino-acid sequence, 822 residues long: Serine/threonine-protein phosphatase 4 regulatory subunit 3 (822 aa).

The WH1 domain maps to 1 to 100 (MTDTRRRVKV…DEIWEKICQV (100 aa)). A disordered region spans residues 744–822 (TSQLSASGHP…PLTKKARLGS (79 aa)). Residues 761-774 (SPGSPESPGSVSKS) are compositionally biased toward low complexity. Over residues 793–808 (YPDDDEEDDDNDEEEK) the composition is skewed to acidic residues.

This sequence belongs to the SMEK family. In terms of assembly, serine/threonine-protein phosphatase 4 (PP4) occurs in different assemblies of the catalytic and one or more regulatory subunits.

In terms of biological role, regulatory subunit of serine/threonine-protein phosphatase 4. The chain is Serine/threonine-protein phosphatase 4 regulatory subunit 3 (smek1) from Xenopus laevis (African clawed frog).